The sequence spans 457 residues: Bifunctional protein GlmU (457 aa).

Residues 1–230 (MSKRYAVVLA…FEESLGVNDR (230 aa)) form a pyrophosphorylase region. UDP-N-acetyl-alpha-D-glucosamine contacts are provided by residues 9 to 12 (LAAG), K23, Q73, and 78 to 79 (GT). D103 serves as a coordination point for Mg(2+). 4 residues coordinate UDP-N-acetyl-alpha-D-glucosamine: G140, E155, N170, and N228. A Mg(2+)-binding site is contributed by N228. Residues 231-251 (IALAEASKLMQRRINENHMRN) are linker. The segment at 252 to 457 (GVTLVNPEST…GYAKHLNHSK (206 aa)) is N-acetyltransferase. UDP-N-acetyl-alpha-D-glucosamine-binding residues include R333 and K351. H363 serves as the catalytic Proton acceptor. UDP-N-acetyl-alpha-D-glucosamine contacts are provided by Y366 and N377. Acetyl-CoA-binding positions include 386–387 (NY), A423, and R440.

In the N-terminal section; belongs to the N-acetylglucosamine-1-phosphate uridyltransferase family. It in the C-terminal section; belongs to the transferase hexapeptide repeat family. In terms of assembly, homotrimer. Mg(2+) serves as cofactor.

The protein resides in the cytoplasm. The enzyme catalyses alpha-D-glucosamine 1-phosphate + acetyl-CoA = N-acetyl-alpha-D-glucosamine 1-phosphate + CoA + H(+). It carries out the reaction N-acetyl-alpha-D-glucosamine 1-phosphate + UTP + H(+) = UDP-N-acetyl-alpha-D-glucosamine + diphosphate. It functions in the pathway nucleotide-sugar biosynthesis; UDP-N-acetyl-alpha-D-glucosamine biosynthesis; N-acetyl-alpha-D-glucosamine 1-phosphate from alpha-D-glucosamine 6-phosphate (route II): step 2/2. Its pathway is nucleotide-sugar biosynthesis; UDP-N-acetyl-alpha-D-glucosamine biosynthesis; UDP-N-acetyl-alpha-D-glucosamine from N-acetyl-alpha-D-glucosamine 1-phosphate: step 1/1. It participates in bacterial outer membrane biogenesis; LPS lipid A biosynthesis. In terms of biological role, catalyzes the last two sequential reactions in the de novo biosynthetic pathway for UDP-N-acetylglucosamine (UDP-GlcNAc). The C-terminal domain catalyzes the transfer of acetyl group from acetyl coenzyme A to glucosamine-1-phosphate (GlcN-1-P) to produce N-acetylglucosamine-1-phosphate (GlcNAc-1-P), which is converted into UDP-GlcNAc by the transfer of uridine 5-monophosphate (from uridine 5-triphosphate), a reaction catalyzed by the N-terminal domain. This chain is Bifunctional protein GlmU, found in Listeria monocytogenes serovar 1/2a (strain ATCC BAA-679 / EGD-e).